The sequence spans 593 residues: UvrABC system protein C (593 aa).

The GIY-YIG domain occupies 17 to 94 (MEPGCYLMKD…IKQYQPRYNI (78 aa)). The 36-residue stretch at 199 to 234 (KTILKSLEERMLTASESLDFERAKEYRDLIQHIQNL) folds into the UVR domain.

The protein belongs to the UvrC family. In terms of assembly, interacts with UvrB in an incision complex.

Its subcellular location is the cytoplasm. In terms of biological role, the UvrABC repair system catalyzes the recognition and processing of DNA lesions. UvrC both incises the 5' and 3' sides of the lesion. The N-terminal half is responsible for the 3' incision and the C-terminal half is responsible for the 5' incision. This Staphylococcus aureus (strain Mu3 / ATCC 700698) protein is UvrABC system protein C.